The primary structure comprises 344 residues: Follistatin (344 aa).

The first 29 residues, 1–29 (MARPRHQPGGLCLLLLLLCQFMEDRSAQA), serve as a signal peptide directing secretion. In terms of domain architecture, TB spans 30–103 (GNCWLRQAKN…TCENVDCGPG (74 aa)). Cystine bridges form between Cys32–Cys55, Cys42–Cys88, Cys56–Cys91, Cys95–Cys106, Cys100–Cys116, Cys118–Cys150, Cys122–Cys143, Cys132–Cys164, Cys168–Cys179, Cys173–Cys189, Cys192–Cys225, Cys196–Cys218, Cys207–Cys239, Cys245–Cys256, Cys250–Cys267, Cys270–Cys302, Cys274–Cys295, and Cys284–Cys316. The Follistatin-like 1 domain occupies 94 to 117 (TCENVDCGPGKKCRMNKKNKPRCV). Positions 112 to 166 (NKPRCVCAPDCSNITWKGLVCGLDGKTYRNECALLKARCKEQPELQVQYQGKCKK) constitute a Kazal-like 1 domain. An N-linked (GlcNAc...) asparagine glycan is attached at Asn124. The Follistatin-like 2 domain occupies 167–190 (TCRDVFCPGSSTCVVDQTNNAYCV). The 56-residue stretch at 186–241 (NAYCVTCNRICPEPTSSEQYLCGNDGVTYPSACHLRKATCLLGRSIGLAYEGKCIK) folds into the Kazal-like 2 domain. In terms of domain architecture, Follistatin-like 3 spans 244–268 (SCDDIQCTGGKKCLWDFKVGRGRCS). Positions 261–318 (KVGRGRCSLCGELCPESKSEEPVCASDNATYASECAMKEAACSSGVLLEVKHSGSCNS) constitute a Kazal-like 3 domain. The N-linked (GlcNAc...) asparagine glycan is linked to Asn288. A disordered region spans residues 316–344 (CNSISEDTEDEEEDEDQDYSFPISSILEW). Over residues 321–333 (EDTEDEEEDEDQD) the composition is skewed to acidic residues.

As to quaternary structure, monomer.

It is found in the secreted. Binds directly to activin and functions as an activin antagonist. Specific inhibitor of the biosynthesis and secretion of pituitary follicle stimulating hormone (FSH). The polypeptide is Follistatin (Bubalus bubalis (Domestic water buffalo)).